We begin with the raw amino-acid sequence, 491 residues long: Ketol-acid reductoisomerase (NADP(+)) (491 aa).

The 194-residue stretch at 15–208 (AQLGKCRFMG…GGHRAGVLES (194 aa)) folds into the KARI N-terminal Rossmann domain. NADP(+) contacts are provided by residues 45–48 (CGAQ), Arg68, Arg76, Ser78, and 108–110 (DKQ). His132 is an active-site residue. Position 158 (Gly158) interacts with NADP(+). 2 KARI C-terminal knotted domains span residues 209–344 (SFVA…TAPQ) and 345–484 (FEGK…MTDM). The Mg(2+) site is built by Asp217, Glu221, Glu389, and Glu393. Residue Ser414 coordinates substrate.

The protein belongs to the ketol-acid reductoisomerase family. Mg(2+) serves as cofactor.

The enzyme catalyses (2R)-2,3-dihydroxy-3-methylbutanoate + NADP(+) = (2S)-2-acetolactate + NADPH + H(+). The catalysed reaction is (2R,3R)-2,3-dihydroxy-3-methylpentanoate + NADP(+) = (S)-2-ethyl-2-hydroxy-3-oxobutanoate + NADPH + H(+). Its pathway is amino-acid biosynthesis; L-isoleucine biosynthesis; L-isoleucine from 2-oxobutanoate: step 2/4. The protein operates within amino-acid biosynthesis; L-valine biosynthesis; L-valine from pyruvate: step 2/4. In terms of biological role, involved in the biosynthesis of branched-chain amino acids (BCAA). Catalyzes an alkyl-migration followed by a ketol-acid reduction of (S)-2-acetolactate (S2AL) to yield (R)-2,3-dihydroxy-isovalerate. In the isomerase reaction, S2AL is rearranged via a Mg-dependent methyl migration to produce 3-hydroxy-3-methyl-2-ketobutyrate (HMKB). In the reductase reaction, this 2-ketoacid undergoes a metal-dependent reduction by NADPH to yield (R)-2,3-dihydroxy-isovalerate. This is Ketol-acid reductoisomerase (NADP(+)) from Salmonella dublin (strain CT_02021853).